A 234-amino-acid polypeptide reads, in one-letter code: (5-formylfuran-3-yl)methyl phosphate synthase (234 aa).

Lysine 27 (schiff-base intermediate with substrate) is an active-site residue. Lysine 85 acts as the Proton acceptor in catalysis.

Belongs to the MfnB family.

It catalyses the reaction 2 D-glyceraldehyde 3-phosphate = 4-(hydroxymethyl)-2-furancarboxaldehyde phosphate + phosphate + 2 H2O. Its pathway is cofactor biosynthesis; methanofuran biosynthesis. Its function is as follows. Catalyzes the formation of 4-(hydroxymethyl)-2-furancarboxaldehyde phosphate (4-HFC-P) from two molecules of glyceraldehyde-3-P (GA-3-P). This Methanosarcina barkeri (strain Fusaro / DSM 804) protein is (5-formylfuran-3-yl)methyl phosphate synthase.